The chain runs to 401 residues: Argininosuccinate synthase (401 aa).

ATP is bound at residue 9–17 (AYSGGLDTS). Tyr88 serves as a coordination point for L-citrulline. Gly118 is a binding site for ATP. Residues Thr120, Asn124, and Asp125 each coordinate L-aspartate. Asn124 serves as a coordination point for L-citrulline. The L-citrulline site is built by Arg128, Ser177, Ser186, Glu262, and Tyr274.

The protein belongs to the argininosuccinate synthase family. Type 1 subfamily. In terms of assembly, homotetramer.

Its subcellular location is the cytoplasm. The catalysed reaction is L-citrulline + L-aspartate + ATP = 2-(N(omega)-L-arginino)succinate + AMP + diphosphate + H(+). It participates in amino-acid biosynthesis; L-arginine biosynthesis; L-arginine from L-ornithine and carbamoyl phosphate: step 2/3. In Chlorobaculum parvum (strain DSM 263 / NCIMB 8327) (Chlorobium vibrioforme subsp. thiosulfatophilum), this protein is Argininosuccinate synthase.